The sequence spans 632 residues: 1-deoxy-D-xylulose-5-phosphate synthase (632 aa).

Thiamine diphosphate-binding positions include H79 and 120–122 (GHA). D152 provides a ligand contact to Mg(2+). Thiamine diphosphate is bound by residues 153-154 (GS), N181, F293, and E377. N181 serves as a coordination point for Mg(2+).

Belongs to the transketolase family. DXPS subfamily. In terms of assembly, homodimer. Mg(2+) serves as cofactor. Requires thiamine diphosphate as cofactor.

It carries out the reaction D-glyceraldehyde 3-phosphate + pyruvate + H(+) = 1-deoxy-D-xylulose 5-phosphate + CO2. The protein operates within metabolic intermediate biosynthesis; 1-deoxy-D-xylulose 5-phosphate biosynthesis; 1-deoxy-D-xylulose 5-phosphate from D-glyceraldehyde 3-phosphate and pyruvate: step 1/1. Functionally, catalyzes the acyloin condensation reaction between C atoms 2 and 3 of pyruvate and glyceraldehyde 3-phosphate to yield 1-deoxy-D-xylulose-5-phosphate (DXP). This Phocaeicola vulgatus (strain ATCC 8482 / DSM 1447 / JCM 5826 / CCUG 4940 / NBRC 14291 / NCTC 11154) (Bacteroides vulgatus) protein is 1-deoxy-D-xylulose-5-phosphate synthase.